The primary structure comprises 316 residues: Beta-ketoacyl-[acyl-carrier-protein] synthase III (316 aa).

Catalysis depends on residues Cys112 and His243. Residues 244 to 248 (QANIR) are ACP-binding. Asn273 is a catalytic residue.

The protein belongs to the thiolase-like superfamily. FabH family. Homodimer.

The protein resides in the cytoplasm. It catalyses the reaction malonyl-[ACP] + acetyl-CoA + H(+) = 3-oxobutanoyl-[ACP] + CO2 + CoA. The protein operates within lipid metabolism; fatty acid biosynthesis. In terms of biological role, catalyzes the condensation reaction of fatty acid synthesis by the addition to an acyl acceptor of two carbons from malonyl-ACP. Catalyzes the first condensation reaction which initiates fatty acid synthesis and may therefore play a role in governing the total rate of fatty acid production. Possesses both acetoacetyl-ACP synthase and acetyl transacylase activities. Its substrate specificity determines the biosynthesis of branched-chain and/or straight-chain of fatty acids. This Actinobacillus pleuropneumoniae serotype 5b (strain L20) protein is Beta-ketoacyl-[acyl-carrier-protein] synthase III.